Reading from the N-terminus, the 432-residue chain is Glutamyl-tRNA reductase (432 aa).

Substrate is bound by residues 49 to 52, S101, 106 to 108, and Q112; these read TCNR and ESQ. C50 acts as the Nucleophile in catalysis. 181–186 contributes to the NADP(+) binding site; that stretch reads GAGETI. The disordered stretch occupies residues 410 to 432; that stretch reads KPGYHHPTLQTTIVKTDETDPAS.

This sequence belongs to the glutamyl-tRNA reductase family. In terms of assembly, homodimer.

It carries out the reaction (S)-4-amino-5-oxopentanoate + tRNA(Glu) + NADP(+) = L-glutamyl-tRNA(Glu) + NADPH + H(+). It participates in porphyrin-containing compound metabolism; protoporphyrin-IX biosynthesis; 5-aminolevulinate from L-glutamyl-tRNA(Glu): step 1/2. Functionally, catalyzes the NADPH-dependent reduction of glutamyl-tRNA(Glu) to glutamate 1-semialdehyde (GSA). This chain is Glutamyl-tRNA reductase, found in Xylella fastidiosa (strain M23).